The sequence spans 329 residues: Calcium homeostasis modulator protein (329 aa).

At 1–14 the chain is on the cytoplasmic side; that stretch reads MTTSINSVVTVFQN. Residues 15–35 traverse the membrane as a helical segment; the sequence is VFTNHGSTLLNGILIATTVGG. At 36 to 53 the chain is on the extracellular side; that stretch reads QSLVRKLTFSCPCAYPLN. Residues 54–74 traverse the membrane as a helical segment; sequence IYHSLVFMFGPTAALLLIGIT. The Cytoplasmic segment spans residues 75–103; the sequence is VNSTTWKLAHGFFFRVRDTRHSWKTTCVS. Residues 104–124 form a helical membrane-spanning segment; that stretch reads WIEVLIQSSVAPIAWLFVVFL. Residues 125–191 lie on the Extracellular side of the membrane; it reads DGGYYRCYRS…DASYLEAESQ (67 aa). N-linked (GlcNAc...) asparagine glycosylation occurs at N148. A helical membrane pass occupies residues 192–212; that stretch reads IYAWGLLLFSGVAAFLVITCN. The Cytoplasmic portion of the chain corresponds to 213–329; sequence RMCDKYTLVQ…QIIVDETKED (117 aa).

The protein belongs to the CALHM family. Expressed in head and body wall muscles, IL2, ASG, ASI, ASJ, PHA and PHB sensory neurons, and spermatheca.

Its subcellular location is the cell membrane. Its function is as follows. Pore-forming subunit of a voltage-gated ion channel. Permeable to monovalent cations, divalent cations and anions with selectivity Ca(2+) &gt; Mg(2+) &gt; Na(+) = K(+) &gt; Cl(-). Acts both as a voltage-gated and calcium-activated ion channel. Required for normal locomotion. The chain is Calcium homeostasis modulator protein from Caenorhabditis elegans.